The following is a 227-amino-acid chain: Ashwin (227 aa).

Over residues 71-84 the composition is skewed to basic and acidic residues; that stretch reads LPRSRWGKRMEKSR. The segment at 71-227 is disordered; it reads LPRSRWGKRM…KKKIQHITWP (157 aa). A compositionally biased stretch (low complexity) spans 88–98; sequence SSSSTHSSSTD. Residues 153–173 are compositionally biased toward polar residues; it reads GASTNCSSSNFSNRTPVSSSG. Residues 178 to 191 show a composition bias toward low complexity; the sequence is SPSNHSNSSVHSNN. Basic and acidic residues predominate over residues 204 to 219; the sequence is GEPDTAKDIKSPETKK.

Belongs to the ashwin family.

The protein localises to the nucleus. The chain is Ashwin from Danio rerio (Zebrafish).